Consider the following 312-residue polypeptide: Urease accessory protein UreD (312 aa).

Positions 1–50 (MRPLAPDARCAPSRPGRGPWYARRPVTTPSDPPAALREPPPPARRAGKAG) are disordered.

It belongs to the UreD family. UreD, UreF and UreG form a complex that acts as a GTP-hydrolysis-dependent molecular chaperone, activating the urease apoprotein by helping to assemble the nickel containing metallocenter of UreC. The UreE protein probably delivers the nickel.

It is found in the cytoplasm. Required for maturation of urease via the functional incorporation of the urease nickel metallocenter. The chain is Urease accessory protein UreD from Sorangium cellulosum (strain So ce56) (Polyangium cellulosum (strain So ce56)).